Here is a 494-residue protein sequence, read N- to C-terminus: Aspartyl/glutamyl-tRNA(Asn/Gln) amidotransferase subunit B (494 aa).

The protein belongs to the GatB/GatE family. GatB subfamily. Heterotrimer of A, B and C subunits.

It carries out the reaction L-glutamyl-tRNA(Gln) + L-glutamine + ATP + H2O = L-glutaminyl-tRNA(Gln) + L-glutamate + ADP + phosphate + H(+). The catalysed reaction is L-aspartyl-tRNA(Asn) + L-glutamine + ATP + H2O = L-asparaginyl-tRNA(Asn) + L-glutamate + ADP + phosphate + 2 H(+). Allows the formation of correctly charged Asn-tRNA(Asn) or Gln-tRNA(Gln) through the transamidation of misacylated Asp-tRNA(Asn) or Glu-tRNA(Gln) in organisms which lack either or both of asparaginyl-tRNA or glutaminyl-tRNA synthetases. The reaction takes place in the presence of glutamine and ATP through an activated phospho-Asp-tRNA(Asn) or phospho-Glu-tRNA(Gln). The sequence is that of Aspartyl/glutamyl-tRNA(Asn/Gln) amidotransferase subunit B from Rhodopseudomonas palustris (strain BisA53).